The chain runs to 229 residues: Uracil-DNA glycosylase (229 aa).

The Proton acceptor role is filled by aspartate 64.

This sequence belongs to the uracil-DNA glycosylase (UDG) superfamily. UNG family.

The protein resides in the cytoplasm. It catalyses the reaction Hydrolyzes single-stranded DNA or mismatched double-stranded DNA and polynucleotides, releasing free uracil.. Functionally, excises uracil residues from the DNA which can arise as a result of misincorporation of dUMP residues by DNA polymerase or due to deamination of cytosine. This chain is Uracil-DNA glycosylase, found in Escherichia coli (strain 55989 / EAEC).